Consider the following 977-residue polypeptide: Disks large-associated protein 1 (977 aa).

Disordered regions lie at residues 150-203 and 349-371; these read TKSH…GWWS and KAMG…KVAA. S169, S356, S359, S362, S366, S383, S412, S415, S419, S422, S431, S503, S510, and S562 each carry phosphoserine. Residue T563 is modified to Phosphothreonine. Residues S565 and S589 each carry the phosphoserine modification. At T590 the chain carries Phosphothreonine. 2 positions are modified to phosphoserine: S592 and S595. Interaction with DYL2 regions lie at residues 650–661 and 672–683; these read LSIGIQVDDAEE and SKFQSVGVQVEE. The interval 899 to 965 is disordered; the sequence is WKQMDPLDKK…QNSATESAES (67 aa). Composition is skewed to basic and acidic residues over residues 903–912 and 928–943; these read DPLDKKERRA and IRER…EARK. Residue S932 is modified to Phosphoserine. Positions 954–963 are enriched in polar residues; it reads VRQNSATESA. The short motif at 975-977 is the PDZ-binding element; sequence TRL.

This sequence belongs to the SAPAP family. Interacts with guanylate kinase-like domain of DLG1, DLG2, DLG3, DLG4 and AIP1. Interacts with the PDZ domain of SHANK1, SHANK2 and SHANK3. Found in a complex with DLG4 and SHANK1, SHANK2 or SHANK3. Found in a complex with DLG4 and BEGAIN. Interacts with DYL2 and LRFN1. Interacts with MPP2 (via the SH3-Guanylate kinase-like sub-module). Post-translationally, ubiquitinated by TRIM3; leading to proteasomal degradation. As to expression, expressed in brain.

It is found in the cell membrane. It localises to the postsynaptic density. Its subcellular location is the synapse. Part of the postsynaptic scaffold in neuronal cells. In Homo sapiens (Human), this protein is Disks large-associated protein 1 (DLGAP1).